Consider the following 255-residue polypeptide: 1-(5-phosphoribosyl)-5-[(5-phosphoribosylamino)methylideneamino] imidazole-4-carboxamide isomerase (255 aa).

Asp8 serves as the catalytic Proton acceptor. Residue Asp129 is the Proton donor of the active site.

The protein belongs to the HisA/HisF family.

The protein localises to the cytoplasm. The enzyme catalyses 1-(5-phospho-beta-D-ribosyl)-5-[(5-phospho-beta-D-ribosylamino)methylideneamino]imidazole-4-carboxamide = 5-[(5-phospho-1-deoxy-D-ribulos-1-ylimino)methylamino]-1-(5-phospho-beta-D-ribosyl)imidazole-4-carboxamide. It functions in the pathway amino-acid biosynthesis; L-histidine biosynthesis; L-histidine from 5-phospho-alpha-D-ribose 1-diphosphate: step 4/9. The sequence is that of 1-(5-phosphoribosyl)-5-[(5-phosphoribosylamino)methylideneamino] imidazole-4-carboxamide isomerase from Prochlorococcus marinus (strain MIT 9313).